Consider the following 280-residue polypeptide: Urease accessory protein UreD 1 (280 aa).

It belongs to the UreD family. As to quaternary structure, ureD, UreF and UreG form a complex that acts as a GTP-hydrolysis-dependent molecular chaperone, activating the urease apoprotein by helping to assemble the nickel containing metallocenter of UreC. The UreE protein probably delivers the nickel.

The protein localises to the cytoplasm. Functionally, required for maturation of urease via the functional incorporation of the urease nickel metallocenter. The chain is Urease accessory protein UreD 1 from Brucella abortus biovar 1 (strain 9-941).